An 89-amino-acid chain; its full sequence is Small ribosomal subunit protein uS14 (89 aa).

The protein belongs to the universal ribosomal protein uS14 family. In terms of assembly, part of the 30S ribosomal subunit. Contacts proteins S3 and S10.

In terms of biological role, binds 16S rRNA, required for the assembly of 30S particles and may also be responsible for determining the conformation of the 16S rRNA at the A site. The chain is Small ribosomal subunit protein uS14 from Amoebophilus asiaticus (strain 5a2).